A 429-amino-acid chain; its full sequence is MRVLILGSGVIGTTTAWYLAQSGCEVTVVDRQPASGLETSYANAGQLSFGYTSPWAAPGVPGKAVKWLFEQHAPLSIRPTRDLRQLAWLSQMLRNCTAERYAVNKARMVRLSDYSRDCLNELRASTGLEFEGRQLGTTQLFRTQQQLDAAAQDIEVLAQYGVPYELLSPAQIAQYEPGLAGGGAQMAGALHLPEDQTGDCRLFTQRLADLATQAGVQFRYGQQIERLEHAGGEITGVQIDGRLVTADRYVLALGSYSADLLLSLGLHLPVYPLKGYSLTIPIVDAQRAPTSTVLDESYKIALTRFDERIRVGGMAEVAGFDLSLNPRRRATLEMVVNDLFPGAGDLAQAEFWTGLRPATPDGTPVVGATPYANLFLNTGHGTLGWTMACGSGRYLADLMQGRTPEIDTEGLDVFRYLSTRSTRPHREAA.

3 to 17 (VLILGSGVIGTTTAW) is an FAD binding site.

The protein belongs to the DadA oxidoreductase family. FAD serves as cofactor.

It carries out the reaction a D-alpha-amino acid + A + H2O = a 2-oxocarboxylate + AH2 + NH4(+). Its pathway is amino-acid degradation; D-alanine degradation; NH(3) and pyruvate from D-alanine: step 1/1. Its function is as follows. Oxidative deamination of D-amino acids. This is D-amino acid dehydrogenase from Xanthomonas campestris pv. campestris (strain B100).